The chain runs to 173 residues: Alpha-crystallin A chain (173 aa).

Met-1 carries the N-acetylmethionine modification. Residues 1–63 form a required for complex formation with BFSP1 and BFSP2 region; that stretch reads MDITIQHPWF…RTVLESGISE (63 aa). Deamidated glutamine; partial is present on Gln-6. Ser-45 carries the post-translational modification Phosphoserine. Gln-50 is subject to Deamidated glutamine; partial. The sHSP domain occupies 52-164; sequence LFRTVLESGI…SDRSIPVSRE (113 aa). Position 99 is an N6-acetyllysine (Lys-99). Zn(2+)-binding residues include His-100, Glu-102, and His-107. The residue at position 122 (Ser-122) is a Phosphoserine. Asn-123 carries the post-translational modification Deamidated asparagine; partial. The tract at residues 144–173 is disordered; that stretch reads PKIHSNMESSHSDRSIPVSREEKPTLAPSS. Basic and acidic residues predominate over residues 153–167; the sequence is SHSDRSIPVSREEKP. His-154 serves as a coordination point for Zn(2+). Ser-162 is a glycosylation site (O-linked (GlcNAc) serine).

It belongs to the small heat shock protein (HSP20) family. Heteromer composed of three CRYAA and one CRYAB subunits. Inter-subunit bridging via zinc ions enhances stability, which is crucial as there is no protein turn over in the lens. Can also form homodimers and homotetramers (dimers of dimers) which serve as the building blocks of homooligomers. Within homooligomers, the zinc-binding motif is created from residues of 3 different molecules. His-100 and Glu-102 from one molecule are ligands of the zinc ion, and His-107 and His-154 residues from additional molecules complete the site with tetrahedral coordination geometry. Part of a complex required for lens intermediate filament formation composed of BFSP1, BFSP2 and CRYAA. In terms of processing, acetylation at Lys-99 may increase chaperone activity. Post-translationally, undergoes age-dependent proteolytical cleavage at the C-terminus.

Its subcellular location is the cytoplasm. It localises to the nucleus. In terms of biological role, contributes to the transparency and refractive index of the lens. Acts as a chaperone, preventing aggregation of various proteins under a wide range of stress conditions. Required for the correct formation of lens intermediate filaments as part of a complex composed of BFSP1, BFSP2 and CRYAA. The polypeptide is Alpha-crystallin A chain (CRYAA) (Didelphis virginiana (North American opossum)).